Here is a 217-residue protein sequence, read N- to C-terminus: Ribulose-phosphate 3-epimerase (217 aa).

S6 contributes to the substrate binding site. Residues H29, D31, and H62 each coordinate a divalent metal cation. D31 (proton acceptor) is an active-site residue. Residues H62, 138–141 (GFGG), 171–173 (DGG), and 193–194 (GS) contribute to the substrate site. Residue D171 coordinates a divalent metal cation. D171 (proton donor) is an active-site residue.

It belongs to the ribulose-phosphate 3-epimerase family. It depends on a divalent metal cation as a cofactor.

The enzyme catalyses D-ribulose 5-phosphate = D-xylulose 5-phosphate. It participates in carbohydrate degradation. Functionally, catalyzes the reversible epimerization of D-ribulose 5-phosphate to D-xylulose 5-phosphate. This Helicobacter pylori (strain ATCC 700392 / 26695) (Campylobacter pylori) protein is Ribulose-phosphate 3-epimerase.